The sequence spans 332 residues: Glycerol-3-phosphate dehydrogenase [NAD(P)+] (332 aa).

NADPH-binding residues include Trp11, Arg30, and Lys108. The sn-glycerol 3-phosphate site is built by Lys108, Gly137, and Ser139. Residue Ala141 coordinates NADPH. 5 residues coordinate sn-glycerol 3-phosphate: Lys192, Asp245, Ser255, Arg256, and Asn257. Lys192 acts as the Proton acceptor in catalysis. NADPH is bound at residue Arg256. Residues Val280 and Glu282 each coordinate NADPH.

This sequence belongs to the NAD-dependent glycerol-3-phosphate dehydrogenase family.

The protein localises to the cytoplasm. The enzyme catalyses sn-glycerol 3-phosphate + NAD(+) = dihydroxyacetone phosphate + NADH + H(+). The catalysed reaction is sn-glycerol 3-phosphate + NADP(+) = dihydroxyacetone phosphate + NADPH + H(+). It participates in membrane lipid metabolism; glycerophospholipid metabolism. Catalyzes the reduction of the glycolytic intermediate dihydroxyacetone phosphate (DHAP) to sn-glycerol 3-phosphate (G3P), the key precursor for phospholipid synthesis. This Burkholderia ambifaria (strain MC40-6) protein is Glycerol-3-phosphate dehydrogenase [NAD(P)+].